We begin with the raw amino-acid sequence, 344 residues long: Arylacetonitrilase (344 aa).

The CN hydrolase domain maps to 5–290; sequence LRVAVTQAEP…EGIVYADLDL (286 aa). Glu45 functions as the Proton acceptor in the catalytic mechanism. Lys126 is a catalytic residue. The active-site Nucleophile is Cys167. The interval 324-344 is disordered; that stretch reads VIPRDEEEPSRKANVVVPKQE.

It belongs to the carbon-nitrogen hydrolase superfamily. Nitrilase family.

The catalysed reaction is a nitrile + 2 H2O = a carboxylate + NH4(+). It catalyses the reaction 4-chlorophenylacetonitrile + 2 H2O = 4-chlorophenylacetate + NH4(+). Its function is as follows. Nitrilase that hydrolyzes preferentially phenylacetonitrile and (R,S)-mandelonitrile. Also acts on dinitriles like phenylenediacetonitriles (PDAs) 1,2-PDA, 1,3-PDA, and 1,4-PDA, and cyanophenyl acetonitriles (CPAs) 2-CPA and 4-CPA. The polypeptide is Arylacetonitrilase (Macrophomina phaseolina (strain MS6) (Charcoal rot fungus)).